We begin with the raw amino-acid sequence, 151 residues long: Chaperonin GroEL (151 aa).

41–45 (DGTTT) contributes to the ATP binding site.

Belongs to the chaperonin (HSP60) family. In terms of assembly, forms a cylinder of 14 subunits composed of two heptameric rings stacked back-to-back. Interacts with the co-chaperonin GroES.

The protein resides in the cytoplasm. It carries out the reaction ATP + H2O + a folded polypeptide = ADP + phosphate + an unfolded polypeptide.. Functionally, together with its co-chaperonin GroES, plays an essential role in assisting protein folding. The GroEL-GroES system forms a nano-cage that allows encapsulation of the non-native substrate proteins and provides a physical environment optimized to promote and accelerate protein folding. In Mycolicibacterium fortuitum (Mycobacterium fortuitum), this protein is Chaperonin GroEL.